The chain runs to 77 residues: Acyl carrier protein (77 aa).

A Carrier domain is found at 2 to 77; sequence SDVAEKVKKI…DAIAYIEEKK (76 aa). Ser-37 carries the O-(pantetheine 4'-phosphoryl)serine modification.

It belongs to the acyl carrier protein (ACP) family. 4'-phosphopantetheine is transferred from CoA to a specific serine of apo-ACP by AcpS. This modification is essential for activity because fatty acids are bound in thioester linkage to the sulfhydryl of the prosthetic group.

It is found in the cytoplasm. Its pathway is lipid metabolism; fatty acid biosynthesis. In terms of biological role, carrier of the growing fatty acid chain in fatty acid biosynthesis. This is Acyl carrier protein from Desulfovibrio desulfuricans (strain ATCC 27774 / DSM 6949 / MB).